The chain runs to 149 residues: Cytochrome c-type biogenesis protein CcmE (149 aa).

Residues 1–7 (MTRKQKR) are Cytoplasmic-facing. A helical; Signal-anchor for type II membrane protein membrane pass occupies residues 8 to 28 (LAVIAGGVGFIMVAVLLVLFA). Over 29-149 (FGQSIAYFYM…GVWKGEGEAK (121 aa)) the chain is Periplasmic. Heme contacts are provided by H123 and Y127.

The protein belongs to the CcmE/CycJ family.

The protein localises to the cell inner membrane. In terms of biological role, heme chaperone required for the biogenesis of c-type cytochromes. Transiently binds heme delivered by CcmC and transfers the heme to apo-cytochromes in a process facilitated by CcmF and CcmH. The protein is Cytochrome c-type biogenesis protein CcmE of Allorhizobium ampelinum (strain ATCC BAA-846 / DSM 112012 / S4) (Agrobacterium vitis (strain S4)).